Consider the following 119-residue polypeptide: uncharacterized protein (119 aa).

A coiled-coil region spans residues 6–36 (QAYLDIQGKIAEFRREIKALRVEEKAITANL). Positions 95-119 (AVTGSSSNVKIRKSAPARNEEDDDG) are disordered.

This is an uncharacterized protein from Frog virus 3 (isolate Goorha) (FV-3).